A 493-amino-acid polypeptide reads, in one-letter code: Ketol-acid reductoisomerase (NADP(+)) (493 aa).

Residues 14-208 (LDQLGRCRFM…GGDRAGVLES (195 aa)) form the KARI N-terminal Rossmann domain. NADP(+) is bound by residues 45-48 (CGAQ), Arg-68, Arg-76, Ser-78, and 108-110 (DKQ). The active site involves His-132. Gly-158 contacts NADP(+). KARI C-terminal knotted domains are found at residues 209–345 (SFVA…APKA) and 346–486 (DGIK…MTDM). Mg(2+) is bound by residues Asp-217, Glu-221, Glu-390, and Glu-394. Position 415 (Ser-415) interacts with substrate.

It belongs to the ketol-acid reductoisomerase family. Mg(2+) serves as cofactor.

The enzyme catalyses (2R)-2,3-dihydroxy-3-methylbutanoate + NADP(+) = (2S)-2-acetolactate + NADPH + H(+). The catalysed reaction is (2R,3R)-2,3-dihydroxy-3-methylpentanoate + NADP(+) = (S)-2-ethyl-2-hydroxy-3-oxobutanoate + NADPH + H(+). The protein operates within amino-acid biosynthesis; L-isoleucine biosynthesis; L-isoleucine from 2-oxobutanoate: step 2/4. It functions in the pathway amino-acid biosynthesis; L-valine biosynthesis; L-valine from pyruvate: step 2/4. Its function is as follows. Involved in the biosynthesis of branched-chain amino acids (BCAA). Catalyzes an alkyl-migration followed by a ketol-acid reduction of (S)-2-acetolactate (S2AL) to yield (R)-2,3-dihydroxy-isovalerate. In the isomerase reaction, S2AL is rearranged via a Mg-dependent methyl migration to produce 3-hydroxy-3-methyl-2-ketobutyrate (HMKB). In the reductase reaction, this 2-ketoacid undergoes a metal-dependent reduction by NADPH to yield (R)-2,3-dihydroxy-isovalerate. The protein is Ketol-acid reductoisomerase (NADP(+)) of Mannheimia succiniciproducens (strain KCTC 0769BP / MBEL55E).